Here is a 344-residue protein sequence, read N- to C-terminus: Probable nicotinate-nucleotide adenylyltransferase/Ap4A hydrolase (344 aa).

The naMN adenylyltransferase stretch occupies residues 1–182 (MIFGGAFDPL…YIHQHNIYLK (182 aa)). The interval 191–344 (EPRMQHCLRV…LKYVRSLQKN (154 aa)) is ap4A hydrolase. An HD domain is found at 193–304 (RMQHCLRVGQ…IYLADKLEPM (112 aa)). An ADP-binding site is contributed by H196. Residues H196, H225, and D226 each contribute to the Fe cation site. ADP is bound by residues 226–229 (DLAK), H255, 281–282 (HT), D299, and R305. D299 contacts Fe cation.

It in the N-terminal section; belongs to the NadD family. In the C-terminal section; belongs to the Ap4A hydrolase YqeK family.

It catalyses the reaction nicotinate beta-D-ribonucleotide + ATP + H(+) = deamido-NAD(+) + diphosphate. It carries out the reaction P(1),P(4)-bis(5'-adenosyl) tetraphosphate + H2O = 2 ADP + 2 H(+). It functions in the pathway cofactor biosynthesis; NAD(+) biosynthesis; deamido-NAD(+) from nicotinate D-ribonucleotide: step 1/1. Its function is as follows. Catalyzes the reversible adenylation of nicotinate mononucleotide (NaMN) to nicotinic acid adenine dinucleotide (NaAD). Hydrolyzes diadenosine 5',5'''-P1,P4-tetraphosphate (Ap4A) to yield ADP. The protein is Probable nicotinate-nucleotide adenylyltransferase/Ap4A hydrolase of Mycoplasma pneumoniae (strain ATCC 29342 / M129 / Subtype 1) (Mycoplasmoides pneumoniae).